The primary structure comprises 136 residues: Inner membrane protein YbhQ (136 aa).

The Cytoplasmic portion of the chain corresponds to 1 to 12 (MKWQQRVRVATG). The helical transmembrane segment at 13-33 (LSCWQIMLHLLVVALLVVGWM) threads the bilayer. Over 34–37 (SKTL) the chain is Periplasmic. Residues 38–58 (VHVGVGLCALYCVTVVMMLVF) traverse the membrane as a helical segment. The Cytoplasmic segment spans residues 59–71 (QRHPEQRWREVAD). Residues 72 to 92 (VLEELTTTWYFGAALIVLWLL) form a helical membrane-spanning segment. The Periplasmic segment spans residues 93-99 (SRVLENN). A helical membrane pass occupies residues 100-120 (FLLAIAGLAILAGPAVVSLLA). Topologically, residues 121 to 136 (KDKKLHHLTSKHRVRR) are cytoplasmic.

It localises to the cell inner membrane. This is Inner membrane protein YbhQ (ybhQ) from Escherichia coli O157:H7.